We begin with the raw amino-acid sequence, 862 residues long: Protein translocase subunit SecA (862 aa).

ATP is bound by residues glutamine 88, 106–110 (GEGKT), and aspartate 506. Cysteine 839, cysteine 841, cysteine 850, and histidine 851 together coordinate Zn(2+).

Belongs to the SecA family. As to quaternary structure, monomer and homodimer. Part of the essential Sec protein translocation apparatus which comprises SecA, SecYEG and auxiliary proteins SecDF-YajC and YidC. The cofactor is Zn(2+).

Its subcellular location is the cell inner membrane. It localises to the cytoplasm. The catalysed reaction is ATP + H2O + cellular proteinSide 1 = ADP + phosphate + cellular proteinSide 2.. Its function is as follows. Part of the Sec protein translocase complex. Interacts with the SecYEG preprotein conducting channel. Has a central role in coupling the hydrolysis of ATP to the transfer of proteins into and across the cell membrane, serving as an ATP-driven molecular motor driving the stepwise translocation of polypeptide chains across the membrane. The protein is Protein translocase subunit SecA of Campylobacter jejuni (strain RM1221).